A 383-amino-acid polypeptide reads, in one-letter code: 8-amino-7-oxononanoate synthase (383 aa).

Substrate is bound at residue Arg21. Residue 108-109 (GF) participates in pyridoxal 5'-phosphate binding. His133 is a binding site for substrate. Residues Ser179, His207, and Thr233 each contribute to the pyridoxal 5'-phosphate site. The residue at position 236 (Lys236) is an N6-(pyridoxal phosphate)lysine. Thr350 serves as a coordination point for substrate.

It belongs to the class-II pyridoxal-phosphate-dependent aminotransferase family. BioF subfamily. In terms of assembly, homodimer. The cofactor is pyridoxal 5'-phosphate.

It catalyses the reaction 6-carboxyhexanoyl-[ACP] + L-alanine + H(+) = (8S)-8-amino-7-oxononanoate + holo-[ACP] + CO2. The protein operates within cofactor biosynthesis; biotin biosynthesis. Catalyzes the decarboxylative condensation of pimeloyl-[acyl-carrier protein] and L-alanine to produce 8-amino-7-oxononanoate (AON), [acyl-carrier protein], and carbon dioxide. The chain is 8-amino-7-oxononanoate synthase from Yersinia enterocolitica serotype O:8 / biotype 1B (strain NCTC 13174 / 8081).